The sequence spans 61 residues: Temporin-SN2 (61 aa).

Positions methionine 1–cysteine 22 are cleaved as a signal peptide. A propeptide spans glutamate 23–lysine 44 (removed in mature form). Lysine 61 is subject to Lysine amide.

Belongs to the frog skin active peptide (FSAP) family. Temporin subfamily. As to expression, expressed by the skin glands.

The protein localises to the secreted. In terms of biological role, antimicrobial peptide. Active against some Gram-positive and Gram-negative bacterial strains. Active against fungus C.glabrata 090902 but not against C.albicans ATCC 12231. Shows very weak hemolytic activity against human erythrocytes. The protein is Temporin-SN2 of Sylvirana spinulosa (Fine-spined frog).